We begin with the raw amino-acid sequence, 138 residues long: Putative ribonuclease VapC45 (138 aa).

Toxic component of a type II toxin-antitoxin (TA) system. An RNase. The cognate antitoxin is VapB45. The protein is Putative ribonuclease VapC45 of Mycobacterium tuberculosis (strain ATCC 25618 / H37Rv).